The following is a 522-amino-acid chain: Putative thymidine phosphorylase (522 aa).

Belongs to the thymidine/pyrimidine-nucleoside phosphorylase family. Type 2 subfamily.

It catalyses the reaction thymidine + phosphate = 2-deoxy-alpha-D-ribose 1-phosphate + thymine. This chain is Putative thymidine phosphorylase, found in Albidiferax ferrireducens (strain ATCC BAA-621 / DSM 15236 / T118) (Rhodoferax ferrireducens).